The sequence spans 268 residues: Proenkephalin-A (268 aa).

The signal sequence occupies residues 1 to 24 (MARFLRLCTWLLALGSCLLATVQA). 3 disulfides stabilise this stretch: C26/C48, C30/C52, and C33/C65. Residues 163-184 (TGDNRAKDSHQQESTNNDEDMS) are disordered. Propeptides lie at residues 197–208 (SPQLEDEAKELQ) and 218–228 (VGRPEWWMDYQ). A Phosphoserine modification is found at S252.

This sequence belongs to the opioid neuropeptide precursor family. In terms of processing, proenkephalin-A is cleaved by CTSL to generate Met-enkephalin. Post-translationally, processed and degraded by ACE. Probably cleaved by ACE. In terms of processing, processed by ACE to generate Met-enkephalin in the nucleus accumbens of the brain. Post-translationally, the N-terminal domain contains 6 conserved cysteines thought to be involved in disulfide bonding and/or processing. As to expression, spermatogenic and somatic cells.

The protein localises to the cytoplasmic vesicle. It localises to the secretory vesicle. It is found in the chromaffin granule lumen. The protein resides in the secreted. Functionally, neuropeptide that competes with and mimic the effects of opiate drugs. They play a role in a number of physiologic functions, including pain perception and responses to stress. In terms of biological role, met-enkephalin-Arg-Phe neuropeptide acts as a strong ligand of Mu-type opioid receptor OPRM1. Met-enkephalin-Arg-Phe-binding to OPRM1 in the nucleus accumbens of the brain increases activation of OPRM1, leading to long-term synaptic depression of glutamate release. Increases glutamate release in the striatum and decreases GABA concentration in the striatum. Its function is as follows. Increases glutamate release in the striatum. The polypeptide is Proenkephalin-A (Penk) (Mus musculus (Mouse)).